Here is a 925-residue protein sequence, read N- to C-terminus: Translation initiation factor IF-2 (925 aa).

2 disordered regions span residues Gly-52–Pro-84 and Ala-98–Leu-326. Over residues Ala-57–Ala-68 the composition is skewed to low complexity. The span at Ala-69 to Pro-84 shows a compositional bias: basic and acidic residues. A compositionally biased stretch (low complexity) spans Ala-98–Ser-138. Pro residues-rich tracts occupy residues Ala-139–Lys-169 and Pro-193–Pro-207. Residues Arg-236 to Gly-296 are compositionally biased toward gly residues. Residues Arg-300–Lys-309 show a composition bias toward basic residues. The 172-residue stretch at Thr-421 to Leu-592 folds into the tr-type G domain. Residues Gly-430–Thr-437 form a G1 region. Gly-430 to Thr-437 is a binding site for GTP. Positions Gly-455–His-459 are G2. A G3 region spans residues Asp-480–Gly-483. GTP-binding positions include Asp-480–His-484 and Asn-534–Asp-537. The segment at Asn-534–Asp-537 is G4. The tract at residues Ser-570 to Lys-572 is G5.

Belongs to the TRAFAC class translation factor GTPase superfamily. Classic translation factor GTPase family. IF-2 subfamily.

The protein resides in the cytoplasm. Functionally, one of the essential components for the initiation of protein synthesis. Protects formylmethionyl-tRNA from spontaneous hydrolysis and promotes its binding to the 30S ribosomal subunits. Also involved in the hydrolysis of GTP during the formation of the 70S ribosomal complex. The protein is Translation initiation factor IF-2 of Mycolicibacterium paratuberculosis (strain ATCC BAA-968 / K-10) (Mycobacterium paratuberculosis).